Consider the following 624-residue polypeptide: DNA mismatch repair protein MutL (624 aa).

Belongs to the DNA mismatch repair MutL/HexB family.

This protein is involved in the repair of mismatches in DNA. It is required for dam-dependent methyl-directed DNA mismatch repair. May act as a 'molecular matchmaker', a protein that promotes the formation of a stable complex between two or more DNA-binding proteins in an ATP-dependent manner without itself being part of a final effector complex. This is DNA mismatch repair protein MutL from Xanthomonas campestris pv. campestris (strain B100).